The sequence spans 467 residues: Acetyl-CoA decarbonylase/synthase complex subunit beta (467 aa).

Cys-193, Cys-196, Cys-282, and Cys-284 together coordinate [Ni-Fe-S] cluster. Positions 403–428 (RWAEEEEEEEEKAPEEEAPAEEPTME) are disordered. The segment covering 405 to 426 (AEEEEEEEEKAPEEEAPAEEPT) has biased composition (acidic residues).

It belongs to the CdhC family. As to quaternary structure, monomer. The ACDS complex is made up of alpha, epsilon, beta, gamma and delta chains with a probable stoichiometry of (alpha(2)epsilon(2))(4)-beta(8)-(gamma(1)delta(1))(8). [Ni-Fe-S] cluster serves as cofactor.

It carries out the reaction Co(I)-[corrinoid Fe-S protein] + acetyl-CoA + H(+) = methyl-Co(III)-[corrinoid Fe-S protein] + CO + CoA. Functionally, part of a complex that catalyzes the reversible cleavage of acetyl-CoA, allowing autotrophic growth from CO(2). The alpha-epsilon complex generates CO from CO(2), while the beta subunit (this protein) combines the CO with CoA and a methyl group to form acetyl-CoA. The methyl group, which is incorporated into acetyl-CoA, is transferred to the beta subunit by a corrinoid iron-sulfur protein (the gamma-delta complex). The chain is Acetyl-CoA decarbonylase/synthase complex subunit beta from Methanopyrus kandleri (strain AV19 / DSM 6324 / JCM 9639 / NBRC 100938).